Here is a 910-residue protein sequence, read N- to C-terminus: Leucine--tRNA ligase (910 aa).

Residues 42-52 (PYPSGKLHMGH) carry the 'HIGH' region motif. The 'KMSKS' region motif lies at 668–672 (KMSKS). Lys-671 lines the ATP pocket.

Belongs to the class-I aminoacyl-tRNA synthetase family.

The protein resides in the cytoplasm. The enzyme catalyses tRNA(Leu) + L-leucine + ATP = L-leucyl-tRNA(Leu) + AMP + diphosphate. The sequence is that of Leucine--tRNA ligase from Neisseria meningitidis serogroup A / serotype 4A (strain DSM 15465 / Z2491).